A 210-amino-acid polypeptide reads, in one-letter code: MIAILDYGMGNIHSCLKAVSLYTKDFVFTKDHSTIENSKALILPGDGHFDKAMENLNSTGLRKTIDKHVTSGKPLFGICIGFQILFESSEEIAQGSKKEQIEGLGYIKGKIKKFHGKDFKVPHIGWNRLQIRRKDKSVLLKGIGDQSFFYFIHSYRPTDAEGNAITGLCDYYQEKFPAVVEKNNIFGTQFHPEKSHTHGLKLLENFIRFI.

One can recognise a Glutamine amidotransferase type-1 domain in the interval 1–210 (MIAILDYGMG…KLLENFIRFI (210 aa)). Cys-79 serves as the catalytic Nucleophile. Residues His-191 and Glu-193 contribute to the active site.

Heterodimer of HisH and HisF.

Its subcellular location is the cytoplasm. The catalysed reaction is 5-[(5-phospho-1-deoxy-D-ribulos-1-ylimino)methylamino]-1-(5-phospho-beta-D-ribosyl)imidazole-4-carboxamide + L-glutamine = D-erythro-1-(imidazol-4-yl)glycerol 3-phosphate + 5-amino-1-(5-phospho-beta-D-ribosyl)imidazole-4-carboxamide + L-glutamate + H(+). It carries out the reaction L-glutamine + H2O = L-glutamate + NH4(+). It functions in the pathway amino-acid biosynthesis; L-histidine biosynthesis; L-histidine from 5-phospho-alpha-D-ribose 1-diphosphate: step 5/9. Functionally, IGPS catalyzes the conversion of PRFAR and glutamine to IGP, AICAR and glutamate. The HisH subunit catalyzes the hydrolysis of glutamine to glutamate and ammonia as part of the synthesis of IGP and AICAR. The resulting ammonia molecule is channeled to the active site of HisF. The chain is Imidazole glycerol phosphate synthase subunit HisH from Leptospira interrogans serogroup Icterohaemorrhagiae serovar copenhageni (strain Fiocruz L1-130).